Consider the following 212-residue polypeptide: Ribosomal RNA small subunit methyltransferase G (212 aa).

S-adenosyl-L-methionine-binding positions include G80, L85, 131–132 (AE), and R146.

This sequence belongs to the methyltransferase superfamily. RNA methyltransferase RsmG family.

It localises to the cytoplasm. The catalysed reaction is guanosine(527) in 16S rRNA + S-adenosyl-L-methionine = N(7)-methylguanosine(527) in 16S rRNA + S-adenosyl-L-homocysteine. Its function is as follows. Specifically methylates the N7 position of guanine in position 527 of 16S rRNA. The sequence is that of Ribosomal RNA small subunit methyltransferase G from Xylella fastidiosa (strain 9a5c).